Consider the following 310-residue polypeptide: tRNA dimethylallyltransferase (310 aa).

9 to 16 (GPTAVGKT) lines the ATP pocket. Substrate is bound at residue 11–16 (TAVGKT). Residues 34-37 (DSMQ) form an interaction with substrate tRNA region.

Belongs to the IPP transferase family. As to quaternary structure, monomer. It depends on Mg(2+) as a cofactor.

The catalysed reaction is adenosine(37) in tRNA + dimethylallyl diphosphate = N(6)-dimethylallyladenosine(37) in tRNA + diphosphate. Functionally, catalyzes the transfer of a dimethylallyl group onto the adenine at position 37 in tRNAs that read codons beginning with uridine, leading to the formation of N6-(dimethylallyl)adenosine (i(6)A). The chain is tRNA dimethylallyltransferase from Syntrophomonas wolfei subsp. wolfei (strain DSM 2245B / Goettingen).